Reading from the N-terminus, the 545-residue chain is ATP synthase subunit alpha (545 aa).

173 to 180 (GDRQTGKS) contributes to the ATP binding site.

This sequence belongs to the ATPase alpha/beta chains family. As to quaternary structure, F-type ATPases have 2 components, CF(1) - the catalytic core - and CF(0) - the membrane proton channel. CF(1) has five subunits: alpha(3), beta(3), gamma(1), delta(1), epsilon(1). CF(0) has three main subunits: a(1), b(2) and c(9-12). The alpha and beta chains form an alternating ring which encloses part of the gamma chain. CF(1) is attached to CF(0) by a central stalk formed by the gamma and epsilon chains, while a peripheral stalk is formed by the delta and b chains.

Its subcellular location is the cell membrane. It catalyses the reaction ATP + H2O + 4 H(+)(in) = ADP + phosphate + 5 H(+)(out). Functionally, produces ATP from ADP in the presence of a proton gradient across the membrane. The alpha chain is a regulatory subunit. In Arthrobacter sp. (strain FB24), this protein is ATP synthase subunit alpha.